Consider the following 147-residue polypeptide: Protein archease (147 aa).

Residues Asp17, Asp146, and Val147 each contribute to the Ca(2+) site.

Belongs to the archease family.

In terms of biological role, activates the tRNA-splicing ligase complex by facilitating the enzymatic turnover of catalytic subunit RtcB. Acts by promoting the guanylylation of RtcB, a key intermediate step in tRNA ligation. Can also alter the NTP specificity of RtcB such that ATP, dGTP or ITP is used efficiently. The sequence is that of Protein archease from Pyrobaculum islandicum (strain DSM 4184 / JCM 9189 / GEO3).